The primary structure comprises 89 residues: Small ribosomal subunit protein uS17 (89 aa).

It belongs to the universal ribosomal protein uS17 family. In terms of assembly, part of the 30S ribosomal subunit.

In terms of biological role, one of the primary rRNA binding proteins, it binds specifically to the 5'-end of 16S ribosomal RNA. The sequence is that of Small ribosomal subunit protein uS17 from Xanthomonas axonopodis pv. citri (strain 306).